We begin with the raw amino-acid sequence, 372 residues long: Galanin receptor type 2 (372 aa).

The Extracellular segment spans residues 1 to 28 (MNGSGSQGAENTSQEGGSGGWQPEAVLV). N-linked (GlcNAc...) asparagine glycosylation is found at Asn2 and Asn11. The chain crosses the membrane as a helical span at residues 29-49 (PLFFALIFLVGTVGNALVLAV). At 50–60 (LLRGGQAVSTT) the chain is on the cytoplasmic side. Residues 61–81 (NLFILNLGVADLCFILCCVPF) traverse the membrane as a helical segment. The Extracellular segment spans residues 82 to 99 (QATIYTLDDWVFGSLLCK). Residues Cys98 and Cys175 are joined by a disulfide bond. The helical transmembrane segment at 100-121 (AVHFLIFLTMHASSFTLAAVSL) threads the bilayer. Over 122-141 (DRYLAIRYPLHSRELRTPRN) the chain is Cytoplasmic. A helical membrane pass occupies residues 142–162 (ALAAIGLIWGLALLFSGPYLS). Residues 163–187 (YYRQSQLANLTVCHPAWSAPRRRAM) are Extracellular-facing. The chain crosses the membrane as a helical span at residues 188–208 (DLCTFVFSYLLPVLVLSLTYA). Residues 209–237 (RTLRYLWRTVDPVTAGSGSQRAKRKVTRM) are Cytoplasmic-facing. A helical membrane pass occupies residues 238 to 258 (IIIVAVLFCLCWMPHHALILC). The Extracellular segment spans residues 259–260 (VW). Residues 261-281 (FGRFPLTRATYALRILSHLVS) form a helical membrane-spanning segment. The Cytoplasmic segment spans residues 282 to 372 (YANSCVNPIV…ASSRTLDPAC (91 aa)). The tract at residues 353-372 (VPPPALPNCTASSRTLDPAC) is disordered. The span at 361–372 (CTASSRTLDPAC) shows a compositional bias: polar residues.

This sequence belongs to the G-protein coupled receptor 1 family.

It is found in the cell membrane. Receptor for the hormone galanin, GALP and spexin-1. The activity of this receptor is mediated by G proteins that activate the phospholipase C/protein kinase C pathway (via G(q)) and that inhibit adenylyl cyclase (via G(i)). The chain is Galanin receptor type 2 (Galr2) from Rattus norvegicus (Rat).